Reading from the N-terminus, the 76-residue chain is KANTR integral membrane protein (76 aa).

Positions 1–25 (MSPFSLLILVICAFSLFFLINLSRG) are cleaved as a signal peptide. The Extracellular portion of the chain corresponds to 26–34 (LSILLVFTK). Residues 35–55 (NQLLALLLLSIVSLFSISLIS) traverse the membrane as a helical segment. Over 56–76 (ALIFFDLLPSTFFGFILLLFF) the chain is Cytoplasmic.

Its subcellular location is the membrane. The sequence is that of KANTR integral membrane protein from Mus musculus (Mouse).